A 494-amino-acid chain; its full sequence is uncharacterized protein (494 aa).

The 2Fe-2S ferredoxin-type domain maps to 4-82 (FTITVKKTEG…NMIIEPLEGF (79 aa)). The [2Fe-2S] cluster site is built by cysteine 46, cysteine 51, cysteine 54, and cysteine 66. 2 4Fe-4S ferredoxin-type domains span residues 127–157 (DLKD…NYPG) and 178–208 (EKEA…IVHN). [4Fe-4S] cluster-binding residues include cysteine 137, cysteine 140, cysteine 143, cysteine 147, cysteine 189, cysteine 192, cysteine 195, and cysteine 199.

It belongs to the succinate dehydrogenase/fumarate reductase iron-sulfur protein family.

This is an uncharacterized protein from Methanococcus maripaludis (strain DSM 14266 / JCM 13030 / NBRC 101832 / S2 / LL).